The primary structure comprises 324 residues: Ribose 1,5-bisphosphate isomerase (324 aa).

Substrate contacts are provided by residues 22–25 and arginine 65; that span reads RGAG. Cysteine 135 acts as the Proton acceptor in catalysis. 137–139 provides a ligand contact to substrate; sequence SKA. Aspartate 204 (proton donor) is an active-site residue. Residues 214–215 and lysine 240 each bind substrate; that span reads NK.

This sequence belongs to the eIF-2B alpha/beta/delta subunits family. R15P isomerase subfamily.

It carries out the reaction alpha-D-ribose 1,5-bisphosphate = D-ribulose 1,5-bisphosphate. Functionally, catalyzes the isomerization of ribose 1,5-bisphosphate (R15P) to ribulose 1,5-bisphosphate (RuBP), the CO(2) acceptor and substrate for RubisCO. Functions in an archaeal AMP degradation pathway, together with AMP phosphorylase and RubisCO. The chain is Ribose 1,5-bisphosphate isomerase from Pyrococcus horikoshii (strain ATCC 700860 / DSM 12428 / JCM 9974 / NBRC 100139 / OT-3).